Reading from the N-terminus, the 539-residue chain is Chaperonin GroEL (539 aa).

Residues threonine 29–proline 32, aspartate 86–threonine 90, glycine 413, asparagine 476–alanine 478, and aspartate 492 each bind ATP.

It belongs to the chaperonin (HSP60) family. As to quaternary structure, forms a cylinder of 14 subunits composed of two heptameric rings stacked back-to-back. Interacts with the co-chaperonin GroES.

The protein resides in the cytoplasm. The enzyme catalyses ATP + H2O + a folded polypeptide = ADP + phosphate + an unfolded polypeptide.. Functionally, together with its co-chaperonin GroES, plays an essential role in assisting protein folding. The GroEL-GroES system forms a nano-cage that allows encapsulation of the non-native substrate proteins and provides a physical environment optimized to promote and accelerate protein folding. The sequence is that of Chaperonin GroEL from Leuconostoc mesenteroides subsp. mesenteroides (strain ATCC 8293 / DSM 20343 / BCRC 11652 / CCM 1803 / JCM 6124 / NCDO 523 / NBRC 100496 / NCIMB 8023 / NCTC 12954 / NRRL B-1118 / 37Y).